We begin with the raw amino-acid sequence, 844 residues long: Translation initiation factor IF-2 (844 aa).

The span at 120-132 (RNSVNLVQPQQEK) shows a compositional bias: polar residues. Residues 120-220 (RNSVNLVQPQ…SGKGFKKANP (101 aa)) are disordered. Residues 161 to 175 (DEEKSSEDKSTESKN) are compositionally biased toward basic and acidic residues. Residues 205–219 (SKAKKASGKGFKKAN) are compositionally biased toward basic residues. Residues 343–510 (SRAPVVTIMG…AVLLQSEVLE (168 aa)) form the tr-type G domain. The tract at residues 352 to 359 (GHVDHGKT) is G1. 352-359 (GHVDHGKT) is a binding site for GTP. The interval 377-381 (GITQH) is G2. Residues 398-401 (DTPG) are G3. GTP-binding positions include 398–402 (DTPGH) and 452–455 (NKID). Residues 452–455 (NKID) are G4. Residues 488 to 490 (SAK) are G5.

The protein belongs to the TRAFAC class translation factor GTPase superfamily. Classic translation factor GTPase family. IF-2 subfamily.

The protein resides in the cytoplasm. One of the essential components for the initiation of protein synthesis. Protects formylmethionyl-tRNA from spontaneous hydrolysis and promotes its binding to the 30S ribosomal subunits. Also involved in the hydrolysis of GTP during the formation of the 70S ribosomal complex. This is Translation initiation factor IF-2 from Francisella philomiragia subsp. philomiragia (strain ATCC 25017 / CCUG 19701 / FSC 153 / O#319-036).